We begin with the raw amino-acid sequence, 505 residues long: uncharacterized protein (505 aa).

Positions 1 to 22 (MAILKSALVGFICFLHFFIVNA) are cleaved as a signal peptide. Residues Asn-25 and Asn-114 are each glycosylated (N-linked (GlcNAc...) asparagine). Helical transmembrane passes span 181–201 (LFLNPILLAINCLIGIWWSFI), 216–236 (ISGVVALSIVCTMVSTGYFYF), 266–286 (FLLLIVSLGYSIVVPSLGSLL), 291–311 (ILAGLQFVSSCFFLSSLFISP), and 318–338 (VILFAAPVFLITLFAMFLWIV). A glycan (N-linked (GlcNAc...) asparagine) is linked at Asn-342. A run of 2 helical transmembrane segments spans residues 365–385 (IVICFGIVAYASIVAANAILI) and 400–420 (LLWFLNYGYTDILVLILMLTI). Asn-454 is a glycosylation site (N-linked (GlcNAc...) asparagine).

Belongs to the LU7TM family.

Its subcellular location is the membrane. This is an uncharacterized protein from Schizosaccharomyces pombe (strain 972 / ATCC 24843) (Fission yeast).